Here is a 252-residue protein sequence, read N- to C-terminus: MMLHAQHMPGQPGAPSLVFLHGFSGDCREWQPVGEQFHGCSRLYIDLPGHGGSAAIPVGGFADVIRLLRATLISYNILKFWLVGYSLGGRVAMMAACQGIPGLCGLVVEGGHPGLQNEQARAERRLSDGRWAERFRHEPLTEVFHDWYQQPVFASLTAQQRQALTALRSQNNGETLAAMLEATSLAVQPDLREALNALAFPFYYLCGERDSKFRALAQEVAATCHVIRNAGHNAHRENPAGVVDSLAQILRL.

Belongs to the AB hydrolase superfamily. MenH family. In terms of assembly, monomer.

It catalyses the reaction 5-enolpyruvoyl-6-hydroxy-2-succinyl-cyclohex-3-ene-1-carboxylate = (1R,6R)-6-hydroxy-2-succinyl-cyclohexa-2,4-diene-1-carboxylate + pyruvate. Its pathway is quinol/quinone metabolism; 1,4-dihydroxy-2-naphthoate biosynthesis; 1,4-dihydroxy-2-naphthoate from chorismate: step 3/7. It participates in quinol/quinone metabolism; menaquinone biosynthesis. In terms of biological role, catalyzes a proton abstraction reaction that results in 2,5-elimination of pyruvate from 2-succinyl-5-enolpyruvyl-6-hydroxy-3-cyclohexene-1-carboxylate (SEPHCHC) and the formation of 2-succinyl-6-hydroxy-2,4-cyclohexadiene-1-carboxylate (SHCHC). The chain is 2-succinyl-6-hydroxy-2,4-cyclohexadiene-1-carboxylate synthase from Salmonella enteritidis PT4 (strain P125109).